An 853-amino-acid chain; its full sequence is Cytochrome P450 monooxygenase mpaDE (853 aa).

Residues methionine 1–leucine 6 lie on the Lumenal side of the membrane. A helical membrane pass occupies residues threonine 7–leucine 29. At lysine 30 to lysine 853 the chain is on the cytoplasmic side. Cysteine 449 contacts heme.

This sequence belongs to the cytochrome P450 family. The cofactor is heme.

It localises to the endoplasmic reticulum membrane. It catalyses the reaction 5-methylorsellinate + reduced [NADPH--hemoprotein reductase] + O2 = 4,6-dihydroxy-2-(hydroxymethyl)-3-methylbenzoate + oxidized [NADPH--hemoprotein reductase] + H2O + H(+). The catalysed reaction is 4,6-dihydroxy-2-(hydroxymethyl)-3-methylbenzoate + H(+) = 5,7-dihydroxy-4-methylphthalide + H2O. Its pathway is secondary metabolite biosynthesis; terpenoid biosynthesis. Its function is as follows. Cytochrome P450 monooxygenase; part of the gene cluster that mediates the biosynthesis of mycophenolic acid (MPA), the first isolated antibiotic natural product in the world obtained from a culture of Penicillium brevicompactum in 1893. MpaDE is an endoplasmic reticulum-bound enzyme that catalyzes the conversion of 5-methylorsellinic acid (5MOA) into the phthalide compound 5,7-dihydroxy-4,6-dimethylphthalide (DHMP). MpaDE first catalyzes hydroxylation of 5-MOA to 4,6-dihydroxy-2-(hydroxymethyl)-3-methylbenzoic acid (DHMB), and then acts as a lactone synthase that catalyzes the ring closure to convert DHMB into DHMP. The first step of the pathway is the synthesis of 5-methylorsellinic acid (5MOA) by the cytosolic polyketide synthase mpaC. 5MOA is then converted to the phthalide compound 5,7-dihydroxy-4,6-dimethylphthalide (DHMP) by the endoplasmic reticulum-bound cytochrome P450 monooxygenase mpaDE. MpaDE first catalyzes hydroxylation of 5-MOA to 4,6-dihydroxy-2-(hydroxymethyl)-3-methylbenzoic acid (DHMB). MpaDE then acts as a lactone synthase that catalyzes the ring closure to convert DHMB into DHMP. The next step is the prenylation of DHMP by the Golgi apparatus-associated prenyltransferase mpaA to yield farnesyl-DHMP (FDHMP). The ER-bound oxygenase mpaB then mediates the oxidative cleavage the C19-C20 double bond in FDHMP to yield FDHMP-3C via a mycophenolic aldehyde intermediate. The O-methyltransferase mpaG catalyzes the methylation of FDHMP-3C to yield MFDHMP-3C. After the cytosolic methylation of FDHMP-3C, MFDHMP-3C enters into peroxisomes probably via free diffusion due to its low molecular weight. Upon a peroxisomal CoA ligation reaction, catalyzed by a beta-oxidation component enzyme acyl-CoA ligase ACL891, MFDHMP-3C-CoA would then be restricted to peroxisomes for the following beta-oxidation pathway steps. The peroxisomal beta-oxidation machinery than converts MFDHMP-3C-CoA into MPA_CoA, via a beta-oxidation chain-shortening process. Finally mpaH acts as a peroxisomal acyl-CoA hydrolase with high substrate specificity toward MPA-CoA to release the final product MPA. This Penicillium brevicompactum protein is Cytochrome P450 monooxygenase mpaDE.